The chain runs to 261 residues: 5'-nucleotidase SurE (261 aa).

Positions 12, 13, 43, and 99 each coordinate a divalent metal cation.

Belongs to the SurE nucleotidase family. A divalent metal cation serves as cofactor.

It localises to the cytoplasm. It carries out the reaction a ribonucleoside 5'-phosphate + H2O = a ribonucleoside + phosphate. Nucleotidase that shows phosphatase activity on nucleoside 5'-monophosphates. The polypeptide is 5'-nucleotidase SurE (Polynucleobacter asymbioticus (strain DSM 18221 / CIP 109841 / QLW-P1DMWA-1) (Polynucleobacter necessarius subsp. asymbioticus)).